The sequence spans 412 residues: Autophagy-related protein 18 (412 aa).

WD repeat units follow at residues 100–139, 142–183, and 186–226; these read RFNKSVLTVRLNRDRIVVCLEDCIYIYNLKDMKMMHNIMD, TNKL…SVST, and AHEG…RLFE. The L/FRRG motif motif lies at 227–230; the sequence is FRRG. One copy of the WD 4 repeat lies at 232–271; the sequence is TRCVNIYSLCFSSDSKYLTSSSNTETVHVFKLEKTEGVDN. The disordered stretch occupies residues 363-412; sequence HNIGPKSDTSRASPTSTGSGGAAKSAEASNQSVPNMDDPDDFPPMSHTSG. The segment covering 372 to 391 has biased composition (low complexity); the sequence is SRASPTSTGSGGAAKSAEAS.

This sequence belongs to the WD repeat PROPPIN family. In terms of tissue distribution, expressed in neurons and intestinal cells.

The protein resides in the cytoplasmic vesicle. It localises to the phagosome membrane. Its subcellular location is the cytoplasm. Its function is as follows. Component of the autophagy machinery that is recruited to phosphatidylinositols on preautophagosomal structures, which are early autophagic structures, to promote autophagosome formation, and the subsequent degradation and clearance of engulfed apoptotic cells and P-granules in somatic cells. In particular, binds with high affinity to phosphatidylinositols including phosphatidylinositol 3-phosphate (PtdIns(3)P), phosphatidylinositol 4-phosphate (PtdIns(4)P), and phosphatidylinositol 5-phosphate (PtdIns(5)P), and more weakly to phosphatidylinositol 3,5-bisphosphate (PtdIns(3,5)P2). Plays a role in mitophagy, which is the autophagic consumption of mitochondria, in response to dietary restriction. Involved in xenophagy, the autophagy-mediated degradation of pathogens and pathogen products, such as toxins. Also plays a role in membrane-pore repair. In a daf-18/PTEN- and daf-16/FOXO-dependent manner, required for the proliferation of germ stem cell progenitors in the gonad during the late phases of larval development. By regulating the release of neurotransmitters and neuropeptides, involved in the control of lifespan in response to dietary restriction and daf-2 signaling. Probably through its involvement in autophagy, required for dauer formation. In Caenorhabditis elegans, this protein is Autophagy-related protein 18.